Here is a 347-residue protein sequence, read N- to C-terminus: D-fructose 1,6-bisphosphatase class 2/sedoheptulose 1,7-bisphosphatase (347 aa).

Mn(2+) is bound by residues Asp33, Glu57, Asp97, and Glu100. Residues 100–102 (EGT), Tyr131, 176–178 (RKR), and 198–200 (DGD) each bind substrate. A Mn(2+)-binding site is contributed by Glu225.

Belongs to the FBPase class 2 family. As to quaternary structure, homotetramer. Requires Mn(2+) as cofactor.

It carries out the reaction beta-D-fructose 1,6-bisphosphate + H2O = beta-D-fructose 6-phosphate + phosphate. It catalyses the reaction D-sedoheptulose 1,7-bisphosphate + H2O = D-sedoheptulose 7-phosphate + phosphate. The protein operates within carbohydrate biosynthesis; Calvin cycle. In terms of biological role, catalyzes the hydrolysis of fructose 1,6-bisphosphate (Fru 1,6-P2) and sedoheptulose 1,7-bisphosphate (Sed 1,7-P2) to fructose 6-phosphate and sedoheptulose 7-phosphate, respectively. This chain is D-fructose 1,6-bisphosphatase class 2/sedoheptulose 1,7-bisphosphatase, found in Synechococcus sp. (strain JA-3-3Ab) (Cyanobacteria bacterium Yellowstone A-Prime).